Here is a 180-residue protein sequence, read N- to C-terminus: UPF0227 protein PC1_2487 (180 aa).

It belongs to the UPF0227 family.

This chain is UPF0227 protein PC1_2487, found in Pectobacterium carotovorum subsp. carotovorum (strain PC1).